The chain runs to 480 residues: UDP-glucose 6-dehydrogenase 4 (480 aa).

Residues 8-13 (GAGYVG), Asp-33, Arg-38, 86-90 (VNTPT), 127-128 (ST), and Glu-161 each bind NAD(+). Substrate-binding positions include 157 to 161 (EFLAE), 216 to 223 (KLAANAFL), and 256 to 269 (RIGP…VGFG). Cys-272 (nucleophile) is an active-site residue. 272–275 (CFQK) contributes to the NAD(+) binding site. 334–335 (FK) contacts substrate. Residue Arg-342 coordinates NAD(+). Ser-393 bears the Phosphoserine mark. Arg-447 contributes to the substrate binding site.

The protein belongs to the UDP-glucose/GDP-mannose dehydrogenase family.

The catalysed reaction is UDP-alpha-D-glucose + 2 NAD(+) + H2O = UDP-alpha-D-glucuronate + 2 NADH + 3 H(+). The protein operates within nucleotide-sugar biosynthesis; UDP-alpha-D-glucuronate biosynthesis; UDP-alpha-D-glucuronate from UDP-alpha-D-glucose: step 1/1. Involved in the biosynthesis of UDP-glucuronic acid (UDP-GlcA), providing nucleotide sugars for cell-wall polymers. In Oryza sativa subsp. japonica (Rice), this protein is UDP-glucose 6-dehydrogenase 4 (UGD4).